A 1628-amino-acid chain; its full sequence is THO complex subunit 2 (1628 aa).

Basic and acidic residues-rich tracts occupy residues methionine 1–glutamine 10 and threonine 1360–arginine 1399. Disordered stretches follow at residues methionine 1–lysine 21 and valine 1337–glutamine 1628. 2 positions are modified to phosphothreonine: threonine 1406 and threonine 1408. The segment covering aspartate 1411–proline 1429 has biased composition (basic and acidic residues). The span at glutamine 1430–serine 1444 shows a compositional bias: polar residues. Residues alanine 1461–arginine 1474 show a composition bias toward basic and acidic residues. A compositionally biased stretch (low complexity) spans asparagine 1476 to valine 1493. The segment covering serine 1494–isoleucine 1526 has biased composition (basic and acidic residues). Polar residues predominate over residues serine 1527–glycine 1550. Residues asparagine 1551 to arginine 1560 are compositionally biased toward basic and acidic residues. The residue at position 1577 (serine 1577) is a Phosphoserine. A compositionally biased stretch (basic and acidic residues) spans leucine 1581–glutamine 1628.

It belongs to the THOC2 family. As to quaternary structure, component of the THO complex. THO associates with DNA and RNA in vitro.

Its subcellular location is the nucleus. Functionally, component the THO subcomplex of the TREX complex, which operates in coupling transcription elongation to mRNA export. The THO complex is recruited to transcribed genes and moves along the gene with the elongating polymerase during transcription. THO is important for stabilizing nascent RNA in the RNA polymerase II elongation complex by preventing formation of DNA:RNA hybrids behind the elongating polymerase. The chain is THO complex subunit 2 (tho2) from Schizosaccharomyces pombe (strain 972 / ATCC 24843) (Fission yeast).